A 520-amino-acid polypeptide reads, in one-letter code: GMP synthase [glutamine-hydrolyzing] (520 aa).

Residues Lys-12–Asp-202 form the Glutamine amidotransferase type-1 domain. The Nucleophile role is filled by Cys-89. Catalysis depends on residues His-176 and Glu-178. One can recognise a GMPS ATP-PPase domain in the interval Trp-203–Arg-395. Ser-230–Ser-236 is a binding site for ATP.

In terms of assembly, homodimer.

The enzyme catalyses XMP + L-glutamine + ATP + H2O = GMP + L-glutamate + AMP + diphosphate + 2 H(+). The protein operates within purine metabolism; GMP biosynthesis; GMP from XMP (L-Gln route): step 1/1. Its function is as follows. Catalyzes the synthesis of GMP from XMP. This chain is GMP synthase [glutamine-hydrolyzing], found in Enterococcus faecalis (strain ATCC 700802 / V583).